Reading from the N-terminus, the 163-residue chain is Nucleotide-binding protein HSM_1099 (163 aa).

This sequence belongs to the YajQ family.

Its function is as follows. Nucleotide-binding protein. In Histophilus somni (strain 2336) (Haemophilus somnus), this protein is Nucleotide-binding protein HSM_1099.